A 218-amino-acid polypeptide reads, in one-letter code: Uracil-DNA glycosylase (218 aa).

It belongs to the uracil-DNA glycosylase (UDG) superfamily. UNG family. Homodimer. Interacts with protein OPG148. Component of the Uracil-DNA glycosylase(UDG)-OPG148-polymerase complex; OPG148 and UDG form a heterodimeric processivity factor that associates with OPG71 to form the processive polymerase holoenzyme.

The catalysed reaction is Hydrolyzes single-stranded DNA or mismatched double-stranded DNA and polynucleotides, releasing free uracil.. Its function is as follows. Plays an essential role in viral replication as a component of the DNA polymerase processivity factor. Excises uracil residues from the DNA which can arise as a result of misincorporation of dUMP residues by DNA polymerase or due to deamination of cytosine. This chain is Uracil-DNA glycosylase (OPG116), found in Monkeypox virus.